An 81-amino-acid chain; its full sequence is Photosystem I iron-sulfur center (81 aa).

2 4Fe-4S ferredoxin-type domains span residues 2 to 31 (SHSV…MVPW) and 39 to 68 (IASS…IRVY). [4Fe-4S] cluster-binding residues include Cys11, Cys14, Cys17, Cys21, Cys48, Cys51, Cys54, and Cys58.

In terms of assembly, the G.violaceus PSI reaction center is composed of one copy each of PsaA,B,C,D,E,F,L,M and Z, and forms trimeric complexes. The cofactor is [4Fe-4S] cluster.

It localises to the cell inner membrane. It carries out the reaction reduced [plastocyanin] + hnu + oxidized [2Fe-2S]-[ferredoxin] = oxidized [plastocyanin] + reduced [2Fe-2S]-[ferredoxin]. In terms of biological role, apoprotein for the two 4Fe-4S centers FA and FB of photosystem I (PSI); essential for photochemical activity. FB is the terminal electron acceptor of PSI, donating electrons to ferredoxin. The C-terminus interacts with PsaA/B/D and helps assemble the protein into the PSI complex. Required for binding of PsaD and PsaE to PSI. PSI is a plastocyanin/cytochrome c6-ferredoxin oxidoreductase, converting photonic excitation into a charge separation, which transfers an electron from the donor P700 chlorophyll pair to the spectroscopically characterized acceptors A0, A1, FX, FA and FB in turn. The chain is Photosystem I iron-sulfur center from Gloeobacter violaceus (strain ATCC 29082 / PCC 7421).